A 248-amino-acid polypeptide reads, in one-letter code: 3-deoxy-manno-octulosonate cytidylyltransferase (248 aa).

It belongs to the KdsB family.

The protein localises to the cytoplasm. It catalyses the reaction 3-deoxy-alpha-D-manno-oct-2-ulosonate + CTP = CMP-3-deoxy-beta-D-manno-octulosonate + diphosphate. It functions in the pathway nucleotide-sugar biosynthesis; CMP-3-deoxy-D-manno-octulosonate biosynthesis; CMP-3-deoxy-D-manno-octulosonate from 3-deoxy-D-manno-octulosonate and CTP: step 1/1. The protein operates within bacterial outer membrane biogenesis; lipopolysaccharide biosynthesis. In terms of biological role, activates KDO (a required 8-carbon sugar) for incorporation into bacterial lipopolysaccharide in Gram-negative bacteria. This Enterobacter sp. (strain 638) protein is 3-deoxy-manno-octulosonate cytidylyltransferase.